The chain runs to 1373 residues: DNA-directed RNA polymerase subunit beta'' (1373 aa).

Zn(2+)-binding residues include Cys-220, Cys-291, Cys-298, and Cys-301.

It belongs to the RNA polymerase beta' chain family. RpoC2 subfamily. In terms of assembly, in plastids the minimal PEP RNA polymerase catalytic core is composed of four subunits: alpha, beta, beta', and beta''. When a (nuclear-encoded) sigma factor is associated with the core the holoenzyme is formed, which can initiate transcription. The cofactor is Zn(2+).

The protein localises to the plastid. The protein resides in the chloroplast. It carries out the reaction RNA(n) + a ribonucleoside 5'-triphosphate = RNA(n+1) + diphosphate. DNA-dependent RNA polymerase catalyzes the transcription of DNA into RNA using the four ribonucleoside triphosphates as substrates. The chain is DNA-directed RNA polymerase subunit beta'' from Silene latifolia (White campion).